The primary structure comprises 397 residues: Myb family transcription factor PHL4 (397 aa).

Positions 1–27 (MIPNDDDDANSMKNYPLNDDDANSMKN) are disordered. One can recognise an HTH myb-type domain in the interval 228-288 (AAAKGRMRWT…HLQKYRTAKY (61 aa)). Positions 259–284 (PKGVLKHMKVEGLTIFHVKSHLQKYR) form a DNA-binding region, H-T-H motif. Residues 319-339 (TETLRIQMEHQKKLHEQLESL) are coiled coil. Residues 332 to 337 (LHEQLE) carry the LHEQLE motif. The disordered stretch occupies residues 359–397 (KQNMGFGGPEQGEKTSAKTPENGSEESESPRPKRPRNEE). Residues 386–397 (ESPRPKRPRNEE) are compositionally biased toward basic and acidic residues. Ser-387 is subject to Phosphoserine.

This sequence belongs to the MYB-CC family.

It localises to the nucleus. Transcription factor involved in male gametophyte development. The chain is Myb family transcription factor PHL4 from Arabidopsis thaliana (Mouse-ear cress).